A 399-amino-acid chain; its full sequence is Transmembrane protein 237 homolog (399 aa).

Pro residues predominate over residues 1 to 11; the sequence is MPPTSRPVPPP. The interval 1 to 158 is disordered; the sequence is MPPTSRPVPP…PHDKRNMPAK (158 aa). Composition is skewed to basic and acidic residues over residues 36 to 45, 111 to 135, and 144 to 158; these read NQQRRFRENN, EAAK…DPRR, and KSFR…MPAK. The next 4 membrane-spanning stretches (helical) occupy residues 222–242, 256–276, 301–321, and 343–363; these read IANI…IFSF, MSLP…VSAI, GLIT…CIQL, and VFNV…AFKP.

The protein belongs to the TMEM237 family.

The protein resides in the membrane. It localises to the cell projection. It is found in the cilium. Functionally, component of the transition zone in primary cilia. Required for ciliogenesis. In Caenorhabditis elegans, this protein is Transmembrane protein 237 homolog.